The sequence spans 157 residues: UPF0262 protein RHECIAT_CH0000657 (157 aa).

This sequence belongs to the UPF0262 family.

In Rhizobium etli (strain CIAT 652), this protein is UPF0262 protein RHECIAT_CH0000657.